The primary structure comprises 402 residues: Methylthioribose-1-phosphate isomerase (402 aa).

D275 acts as the Proton donor in catalysis.

Belongs to the eIF-2B alpha/beta/delta subunits family. MtnA subfamily.

It is found in the cytoplasm. Its subcellular location is the nucleus. The enzyme catalyses 5-(methylsulfanyl)-alpha-D-ribose 1-phosphate = 5-(methylsulfanyl)-D-ribulose 1-phosphate. Its pathway is amino-acid biosynthesis; L-methionine biosynthesis via salvage pathway; L-methionine from S-methyl-5-thio-alpha-D-ribose 1-phosphate: step 1/6. Functionally, catalyzes the interconversion of methylthioribose-1-phosphate (MTR-1-P) into methylthioribulose-1-phosphate (MTRu-1-P). This chain is Methylthioribose-1-phosphate isomerase, found in Clavispora lusitaniae (strain ATCC 42720) (Yeast).